The chain runs to 132 residues: U10-hexatoxin-Hi1a (132 aa).

An N-terminal signal peptide occupies residues 1 to 20 (MKGFIVFSLSLCLVFTVCLA). Positions 21–30 (EDELMKEAVR) are excised as a propeptide.

Post-translationally, contains 5 disulfide bonds. In terms of tissue distribution, expressed by the venom gland.

It is found in the secreted. Its function is as follows. Probable ion channel inhibitor. The sequence is that of U10-hexatoxin-Hi1a from Hadronyche infensa (Fraser island funnel-web spider).